The sequence spans 704 residues: Elongation factor G (704 aa).

One can recognise a tr-type G domain in the interval 10-290 (NKVRNIGIMA…AVIDYLPSPL (281 aa)). Residues 19-26 (AHIDAGKT), 83-87 (DTPGH), and 137-140 (NKMD) each bind GTP.

This sequence belongs to the TRAFAC class translation factor GTPase superfamily. Classic translation factor GTPase family. EF-G/EF-2 subfamily.

It localises to the cytoplasm. Functionally, catalyzes the GTP-dependent ribosomal translocation step during translation elongation. During this step, the ribosome changes from the pre-translocational (PRE) to the post-translocational (POST) state as the newly formed A-site-bound peptidyl-tRNA and P-site-bound deacylated tRNA move to the P and E sites, respectively. Catalyzes the coordinated movement of the two tRNA molecules, the mRNA and conformational changes in the ribosome. The chain is Elongation factor G from Clavibacter michiganensis subsp. michiganensis (strain NCPPB 382).